A 208-amino-acid polypeptide reads, in one-letter code: LexA repressor (208 aa).

The segment at residues 29–49 is a DNA-binding region (H-T-H motif); the sequence is IREIGDSLNINSTSTVHNNIL. Residues serine 131 and lysine 168 each act as for autocatalytic cleavage activity in the active site.

It belongs to the peptidase S24 family. In terms of assembly, homodimer.

It carries out the reaction Hydrolysis of Ala-|-Gly bond in repressor LexA.. Represses a number of genes involved in the response to DNA damage (SOS response), including recA and lexA. In the presence of single-stranded DNA, RecA interacts with LexA causing an autocatalytic cleavage which disrupts the DNA-binding part of LexA, leading to derepression of the SOS regulon and eventually DNA repair. This chain is LexA repressor, found in Finegoldia magna (strain ATCC 29328 / DSM 20472 / WAL 2508) (Peptostreptococcus magnus).